Here is a 237-residue protein sequence, read N- to C-terminus: tRNA (guanine-N(7)-)-methyltransferase (237 aa).

4 residues coordinate S-adenosyl-L-methionine: Glu67, Glu92, Asp119, and Asp141. The active site involves Asp141. Residues Lys145, Asp177, and 214–217 contribute to the substrate site; that span reads TRYE.

It belongs to the class I-like SAM-binding methyltransferase superfamily. TrmB family.

The catalysed reaction is guanosine(46) in tRNA + S-adenosyl-L-methionine = N(7)-methylguanosine(46) in tRNA + S-adenosyl-L-homocysteine. Its pathway is tRNA modification; N(7)-methylguanine-tRNA biosynthesis. In terms of biological role, catalyzes the formation of N(7)-methylguanine at position 46 (m7G46) in tRNA. The protein is tRNA (guanine-N(7)-)-methyltransferase of Jannaschia sp. (strain CCS1).